A 604-amino-acid chain; its full sequence is 3-hydroxy-3-methylglutaryl-coenzyme A reductase (604 aa).

Residues 1–31 (MDVRRRSEKPAYPTKEFAAGEKPLKPHKQQQ) form a disordered region. Transmembrane regions (helical) follow at residues 40 to 62 (ASDALPLPLYLTNGLFFTMFFSV) and 90 to 110 (AIASLIASVIYLLGFFGIGFV). The linker stretch occupies residues 111 to 189 (QSFVSRDNND…PLVTPAASEE (79 aa)). Residues 190-604 (DEEIIKSVVQ…STKDVTKASS (415 aa)) form a catalytic region. The Charge relay system role is filled by glutamate 283. Asparagine 347 is a glycosylation site (N-linked (GlcNAc...) asparagine). Lysine 415 (charge relay system) is an active-site residue. N-linked (GlcNAc...) asparagine glycosylation occurs at asparagine 460. Aspartate 491 (charge relay system) is an active-site residue. Histidine 589 functions as the Proton donor in the catalytic mechanism. Asparagine 593 carries N-linked (GlcNAc...) asparagine glycosylation.

It belongs to the HMG-CoA reductase family. In terms of tissue distribution, found in protoplasts and leaves submitted to stress. Low levels found in apexes, anthers and roots.

It is found in the endoplasmic reticulum membrane. The catalysed reaction is (R)-mevalonate + 2 NADP(+) + CoA = (3S)-3-hydroxy-3-methylglutaryl-CoA + 2 NADPH + 2 H(+). Its pathway is metabolic intermediate biosynthesis; (R)-mevalonate biosynthesis; (R)-mevalonate from acetyl-CoA: step 3/3. Its function is as follows. Catalyzes the synthesis of mevalonate, the specific precursor of all isoprenoid compounds present in plants. Possible role in plant defense mechanisms as well as in the cell cycle. This is 3-hydroxy-3-methylglutaryl-coenzyme A reductase (HMGR) from Nicotiana sylvestris (Wood tobacco).